A 644-amino-acid polypeptide reads, in one-letter code: Biosynthetic arginine decarboxylase (644 aa).

An N6-(pyridoxal phosphate)lysine modification is found at Lys100. 282 to 292 (CDVGGGLAIDY) provides a ligand contact to substrate.

The protein belongs to the Orn/Lys/Arg decarboxylase class-II family. SpeA subfamily. Mg(2+) is required as a cofactor. Requires pyridoxal 5'-phosphate as cofactor.

The enzyme catalyses L-arginine + H(+) = agmatine + CO2. In terms of biological role, catalyzes the biosynthesis of agmatine from arginine. The sequence is that of Biosynthetic arginine decarboxylase from Gloeobacter violaceus (strain ATCC 29082 / PCC 7421).